Here is a 340-residue protein sequence, read N- to C-terminus: tRNA N6-adenosine threonylcarbamoyltransferase (340 aa).

Residues histidine 113 and histidine 117 each contribute to the Fe cation site. Residues 135-139 (LVSGG), aspartate 169, glycine 182, aspartate 186, and asparagine 274 contribute to the substrate site. Position 302 (aspartate 302) interacts with Fe cation.

It belongs to the KAE1 / TsaD family. Fe(2+) is required as a cofactor.

The protein localises to the cytoplasm. The enzyme catalyses L-threonylcarbamoyladenylate + adenosine(37) in tRNA = N(6)-L-threonylcarbamoyladenosine(37) in tRNA + AMP + H(+). Required for the formation of a threonylcarbamoyl group on adenosine at position 37 (t(6)A37) in tRNAs that read codons beginning with adenine. Is involved in the transfer of the threonylcarbamoyl moiety of threonylcarbamoyl-AMP (TC-AMP) to the N6 group of A37, together with TsaE and TsaB. TsaD likely plays a direct catalytic role in this reaction. This Mycolicibacterium smegmatis (strain ATCC 700084 / mc(2)155) (Mycobacterium smegmatis) protein is tRNA N6-adenosine threonylcarbamoyltransferase.